A 488-amino-acid polypeptide reads, in one-letter code: Lysine--tRNA ligase (488 aa).

Mg(2+)-binding residues include Glu398 and Glu405.

This sequence belongs to the class-II aminoacyl-tRNA synthetase family. Homodimer. It depends on Mg(2+) as a cofactor.

It is found in the cytoplasm. The enzyme catalyses tRNA(Lys) + L-lysine + ATP = L-lysyl-tRNA(Lys) + AMP + diphosphate. In Carboxydothermus hydrogenoformans (strain ATCC BAA-161 / DSM 6008 / Z-2901), this protein is Lysine--tRNA ligase.